The primary structure comprises 284 residues: CUE domain-containing protein 2 (284 aa).

The region spanning 141-184 (EELPGVDVLLEVFPTCSMEQAQWVLAKARGDLEEAVHMLVEGKE) is the CUE domain. The interval 183–204 (KEEGPPGWDGPSQDLPRRLRGP) is disordered.

The protein belongs to the CUEDC2 family. In terms of assembly, interacts with PGR and ESR1.

The protein resides in the cytoplasm. The protein localises to the nucleus. In terms of biological role, controls PGR and ESR1 protein levels through their targeting for ubiquitination and subsequent proteasomal degradation. This is CUE domain-containing protein 2 (Cuedc2) from Mus musculus (Mouse).